The primary structure comprises 307 residues: Putative S-adenosyl-L-methionine-dependent methyltransferase MMAR_4570 (307 aa).

Residues Asp-128 and 157 to 158 (DL) each bind S-adenosyl-L-methionine.

Belongs to the UPF0677 family.

Exhibits S-adenosyl-L-methionine-dependent methyltransferase activity. The sequence is that of Putative S-adenosyl-L-methionine-dependent methyltransferase MMAR_4570 from Mycobacterium marinum (strain ATCC BAA-535 / M).